Consider the following 139-residue polypeptide: MKRGVLLNAPLSALVARMGHTDEITVCDAGLPIPAGPERIDLALMAGTPSLETVLTALLTDLVVEKVIMASEIKQISPAAHQALVDQLEAHAAAQGKPITIEYCLHEAFKARSHQSKAIVRSGEVTPYANLILCAGVAF.

His20 (proton donor) is an active-site residue. Substrate contacts are provided by residues Asp28, His106, and 128–130 (YAN).

This sequence belongs to the RbsD / FucU family. RbsD subfamily. In terms of assembly, homodecamer.

The protein localises to the cytoplasm. The catalysed reaction is beta-D-ribopyranose = beta-D-ribofuranose. Its pathway is carbohydrate metabolism; D-ribose degradation; D-ribose 5-phosphate from beta-D-ribopyranose: step 1/2. Functionally, catalyzes the interconversion of beta-pyran and beta-furan forms of D-ribose. The polypeptide is D-ribose pyranase (Aeromonas hydrophila subsp. hydrophila (strain ATCC 7966 / DSM 30187 / BCRC 13018 / CCUG 14551 / JCM 1027 / KCTC 2358 / NCIMB 9240 / NCTC 8049)).